The chain runs to 393 residues: MTTFDKGAKPDIGTFVAFDHVRFVVGNAKQAAYWYCANFGFEPFAYKGLETGSRITAQHAIRQDKIVFIFESALLPDNSELGNHLVQHGDGVKDVCFEVEDLDSIIAHAKAAGATIVHDITEESDADGSIRYATLRTYGETDHTLLERKNYRGAFLPGFKAHPMPATFFKTLPRVGLNFLDHCVGNQPDLQMDSAVQWYEKVLKFHRFWSVDDSMIHTEYSALRSIVVTNFEETIKMPINEPATSDKKAISQIQEYVDYYGGSGVQHIALNTSDIITAIEALRARGCEFLSIPSSYYDNLKERLAASSMVVKEDMDRLQKLHILVDFDENGYLLQIFSKPCQDRPTLFLEIIQRQNHEGFGAGNFKALFESIELEQTKRGNLFYDNVKDGNTK.

VOC domains lie at 17–148 (AFDH…LLER) and 179–339 (FLDH…IFSK). Fe cation contacts are provided by histidine 182, histidine 267, and glutamate 350.

The protein belongs to the 4HPPD family. Fe cation serves as cofactor. As to expression, expressed in the hypodermis and intestine.

The catalysed reaction is 3-(4-hydroxyphenyl)pyruvate + O2 = homogentisate + CO2. The protein operates within amino-acid degradation; L-phenylalanine degradation; acetoacetate and fumarate from L-phenylalanine: step 3/6. Its function is as follows. Key enzyme in the degradation of tyrosine. The polypeptide is 4-hydroxyphenylpyruvate dioxygenase (Caenorhabditis elegans).